The chain runs to 375 residues: tRNA-specific 2-thiouridylase MnmA (375 aa).

ATP is bound by residues 8–15 (GLSGGVDS) and methionine 34. The segment at 104–106 (NPD) is interaction with target base in tRNA. Residue cysteine 109 is the Nucleophile of the active site. A disulfide bridge links cysteine 109 with cysteine 208. Glycine 134 serves as a coordination point for ATP. The tract at residues 158 to 160 (KDQ) is interaction with tRNA. The Cysteine persulfide intermediate role is filled by cysteine 208. Residues 321-322 (RY) are interaction with tRNA.

Belongs to the MnmA/TRMU family.

It localises to the cytoplasm. The enzyme catalyses S-sulfanyl-L-cysteinyl-[protein] + uridine(34) in tRNA + AH2 + ATP = 2-thiouridine(34) in tRNA + L-cysteinyl-[protein] + A + AMP + diphosphate + H(+). Its function is as follows. Catalyzes the 2-thiolation of uridine at the wobble position (U34) of tRNA, leading to the formation of s(2)U34. This is tRNA-specific 2-thiouridylase MnmA from Mycoplasma capricolum subsp. capricolum (strain California kid / ATCC 27343 / NCTC 10154).